The sequence spans 208 residues: NADH-ubiquinone oxidoreductase chain 4 (208 aa).

6 helical membrane-spanning segments follow: residues 23 to 43 (VWINVTTYSLLINLISINLLW), 60 to 80 (PLSAPLLVLTTWLLPLMLLAS), 93 to 113 (KLYISLLVCLQTLLIMTFSAN), 114 to 134 (ELIMFYILFEATLIPTLIIIT), 147 to 167 (IYFLFYTLVGSIPLLIALIYI), and 185 to 205 (PINQTWSNNILWLACIMAFMV).

It belongs to the complex I subunit 4 family. As to quaternary structure, core subunit of respiratory chain NADH dehydrogenase (Complex I) which is composed of 45 different subunits.

It is found in the mitochondrion inner membrane. It catalyses the reaction a ubiquinone + NADH + 5 H(+)(in) = a ubiquinol + NAD(+) + 4 H(+)(out). In terms of biological role, core subunit of the mitochondrial membrane respiratory chain NADH dehydrogenase (Complex I) which catalyzes electron transfer from NADH through the respiratory chain, using ubiquinone as an electron acceptor. Essential for the catalytic activity and assembly of complex I. In Microtus pennsylvanicus (Meadow vole), this protein is NADH-ubiquinone oxidoreductase chain 4 (MT-ND4).